The sequence spans 324 residues: Probable UDP-sugar transporter protein SLC35A4 (324 aa).

The Cytoplasmic portion of the chain corresponds to 1–18 (MSVEDGGMPGLGRPRQAR). The chain crosses the membrane as a helical span at residues 19 to 39 (WTLMLLLSTAMYGAHAPLLAL). Topologically, residues 40 to 52 (CHVDGRVPFRPSS) are lumenal. Residues 53 to 73 (AVLLTELTKLLLCAFSLLVGW) traverse the membrane as a helical segment. Residues 74-85 (QAWPQGPPPWRQ) are Cytoplasmic-facing. Residues 86-106 (AAPFALSALLYGANNNLVIYL) form a helical membrane-spanning segment. Over 107 to 142 (QRYMDPSTYQVLSNLKIGSTAVLYCLCLRHRLSVRQ) the chain is Lumenal. The chain crosses the membrane as a helical span at residues 143 to 163 (GLALLLLMAAGACYAAGGLQV). Over 164 to 180 (PGNTLPSPPPAAAASPM) the chain is Cytoplasmic. The chain crosses the membrane as a helical span at residues 181 to 201 (PLHITPLGLLLLILYCLISGL). At 202–214 (SSVYTELLMKRQR) the chain is on the lumenal side. The chain crosses the membrane as a helical span at residues 215–235 (LPLALQNLFLYTFGVLLNLGL). Residues 236–250 (HAGGGSGPGLLEGFS) lie on the Cytoplasmic side of the membrane. Residues 251-271 (GWAALVVLSQALNGLLMSAVM) form a helical membrane-spanning segment. At 272 to 275 (KHGS) the chain is on the lumenal side. A helical transmembrane segment spans residues 276–298 (SITRLFVVSCSLVVNAVLSAVLL). At 299–324 (RLQLTAAFFLATLLIGLAMRLYYGSR) the chain is on the cytoplasmic side.

The protein belongs to the nucleotide-sugar transporter family. SLC35A subfamily. In terms of assembly, found in a complex with SLC35A2 and SLC35A3.

Its subcellular location is the golgi apparatus membrane. It catalyses the reaction CDP-L-ribitol(in) + CDP(out) = CDP-L-ribitol(out) + CDP(in). Its function is as follows. Mediates the transport of CDP-ribitol. Does not exhibit CMP-sialic acid, UDP-galactose and UDP-N-acetylglucosamine transport activity. The sequence is that of Probable UDP-sugar transporter protein SLC35A4 from Homo sapiens (Human).